The primary structure comprises 159 residues: Small ribosomal subunit protein uS7 (159 aa).

Belongs to the universal ribosomal protein uS7 family. Part of the 30S ribosomal subunit. Contacts proteins S9 and S11.

Functionally, one of the primary rRNA binding proteins, it binds directly to 16S rRNA where it nucleates assembly of the head domain of the 30S subunit. Is located at the subunit interface close to the decoding center, probably blocks exit of the E-site tRNA. The polypeptide is Small ribosomal subunit protein uS7 (Elusimicrobium minutum (strain Pei191)).